A 1730-amino-acid chain; its full sequence is Nebulin-related-anchoring protein (1730 aa).

The LIM zinc-binding domain maps to 4–64; it reads QPCSRCGYGV…HAHNPKNNTF (61 aa). 44 Nebulin repeats span residues 63-97, 156-166, 175-202, 203-237, 246-273, 298-307, 316-343, 348-382, 389-417, 419-453, 487-521, 522-556, 558-592, 602-626, 627-661, 662-692, 702-724, 726-760, 761-795, 797-831, 844-869, 870-896, 901-935, 945-963, 969-1003, 1004-1038, 1040-1074, 1078-1112, 1113-1139, 1144-1178, 1183-1206, 1212-1246, 1247-1281, 1283-1317, 1321-1355, 1356-1390, 1391-1421, 1429-1449, 1455-1481, 1490-1524, 1526-1560, 1564-1598, 1599-1626, and 1640-1664; these read TFTSVYHTPLNLNVRTFPEAISGIHDQEDGEQCKS, EYTEDYEQPRG, TPAYQRAKKANQLASQVEYKRGHDERIS, RFSTVVDTPELLRSKAGAQLQSDVRYTEDYEQQRG, TPAYQIAKRANELASDVRYHQQYQKEMR, YPEEYEEHRG, TPAYQNAKKAHELASDIKYRQDFNKMKG, HSLPAQDNLVLKQAQSVNKLVSEVEYKKDLESSRG, ETPQFRNVSKISKFTSDNKYKENYQNHMR, RYEGVGMDRRTLHAMKVGSLASNVAYKADYKHDIV, KYSSVTDTPQIVQAKINAQQLSHVNYRADYEKNKL, NYTLPQDVPQLVKAKTNAKLFSEVKYKEGWEKTKG, GFEMKLDAMSLLAAKASGELASNIKYKEEYEKTKG, LLHSLQIAKMSSEVEYKKGFEESKT, RFHLPMDMVNIRHAKKAQTLASDLDYRKKLHEYTV, LPEDMKTQWAKKAYGLQSELQYKADLAWMKG, NLEQAKKAGQLVSEKNYRQRVDE, KFTSVTDSSQMEHAKKSQELQSGVAYKAGNEQSVH, QYTISKDEPLFLQARANAANLSEKLYKSSWENQKA, GFELRLDSLTFLAAKAKRDLASEVKYKEDYERSRG, QMSHSLQMSKLQSELEYKKGFEDTKS, QCHVSLDMVHLVHARKAQHLATDVGYK, HFTALPTDMKVEWAKKAYGLQSDNQYRADVKWMKG, NVEQAKKAGELISEKKYRQ, KFTSIKDTPEMVQARISYTQAVDRLYREQGENIKH, HYTPTADLPEVLLAKLNAMNISETRYKESWSKLRD, GYKLRLDALPFQAAKASGEIISDYKYKEAFEKMKG, GSRSLEDDISLAHSVYATSLQSDVNYKKGFEHSKA, QFHLPLDMAALVHAKKAQTLASNQDYK, QYTSLAEDLRLSCAKKAHKLQSENLYRSDLNFMRG, IPGTLEIEGRKKASELISESKYRQ, KYTAVTDTPNLLHAKFSNQITNERLYKAAGEDARH, EYTMTLGLPEFIRAKTNAANLSDARYKESWRNLRA, GYKLTIEALPFQAARASGDIASDFLYRHDFVKERG, GPQSVRDDPRIQHCRRMGQLQSELQYRRGATSSQA, QFHLPMDMVHLVHAKNAQALASDHDYRTQYHKFTA, LPEDLKMAWAKKAHALQSELRYKSDLIGMKG, SPQMESAKKAGELISETKYRK, KFTTVVDSPDLVHAKNSYMHCNERMYR, RYTLIPDHPDFTRARLNALHLSDKVYRNSWEQTRA, SYDFRLDAIPFQTARASREIASDFRYKEAFLRDRG, GYRSVDDDPRMKHFLNVGRLQSDNEYKKDFAKSRS, QFHSSTDQPGLLQAKRSQQLASDVHYRQ, and LRHAQKAHQLQSDVKYKSDLNLTRG. Serine 1081 carries the phosphoserine modification. Residues 1595 to 1620 form a disordered region; it reads KSRSQFHSSTDQPGLLQAKRSQQLAS. A compositionally biased stretch (polar residues) spans 1596 to 1606; it reads SRSQFHSSTDQ.

As to quaternary structure, interacts with actin, alpha-actinin, KLHL41, TLN1 and VCL. Interacts with CSRP3. Expressed in cardiac and skeletal muscle.

May be involved in anchoring the terminal actin filaments in the myofibril to the membrane and in transmitting tension from the myofibrils to the extracellular matrix. The polypeptide is Nebulin-related-anchoring protein (Homo sapiens (Human)).